Here is a 328-residue protein sequence, read N- to C-terminus: Deoxynucleotidyltransferase terminal-interacting protein 1 (328 aa).

Disordered regions lie at residues 1-30 and 142-176; these read MGATGDTEQPRGPGGAERGGLELGDAGAAG and ELPGIKRGRQAEEESHRGSPIPKKRKGRPPGHVLS. The segment covering 12-22 has biased composition (gly residues); it reads GPGGAERGGLE. An important for dimerization region spans residues 56–147; sequence MTTSFTDPAI…RLAHELPGIK (92 aa). The span at 142 to 158 shows a compositional bias: basic and acidic residues; that stretch reads ELPGIKRGRQAEEESHR. The segment at residues 158-172 is a DNA-binding region (a.T hook); the sequence is RGSPIPKKRKGRPPG. At Ser-160 the chain carries Phosphoserine. Positions 163-169 match the Nuclear localization signal motif; it reads PKKRKGR. Residues 196–315 are important for DNA and nucleosome binding; the sequence is REGPKWDPAR…MRKYMETLRT (120 aa). The H-T-H motif DNA-binding region spans 215–236; it reads GSRANKALGMGGTRGRIYIKHP.

Monomer and homodimer. A minor proportion may form homotrimers. Interacts with ZNF541. Interacts with the terminal deoxynucleotidyltransferase DNTT. Interacts with TRERF1. Identified in a histone deacetylase complex that contains DNTTIP1, HDAC1 and MIDEAS; this complex assembles into a tetramer that contains four copies of each protein chain. Component of a histone deacetylase complex containing DNTTIP1, ZNF541, HDAC1 and HDAC2. Identified in a complex with KCTD19, HDAC1, HDAC2 and ZNF541.

Its subcellular location is the nucleus. Its function is as follows. Increases DNTT terminal deoxynucleotidyltransferase activity (in vitro). Also acts as a transcriptional regulator, binding to the consensus sequence 5'-GNTGCATG-3' following an AT-tract. Associates with RAB20 promoter and positively regulates its transcription. Binds DNA and nucleosomes; may recruit HDAC1 complexes to nucleosomes or naked DNA. The chain is Deoxynucleotidyltransferase terminal-interacting protein 1 (Dnttip1) from Mus musculus (Mouse).